Consider the following 302-residue polypeptide: Dihydroorotate dehydrogenase B (NAD(+)), catalytic subunit (302 aa).

FMN-binding positions include Ser-23 and 47-48; that span reads KS. Substrate contacts are provided by residues Lys-47, 71 to 75, and Asn-125; that span reads NAMGL. FMN is bound at residue Asn-125. Cys-128 (nucleophile) is an active-site residue. FMN-binding residues include Lys-163 and Ile-189. Residue 190–191 participates in substrate binding; that stretch reads NT. FMN contacts are provided by residues Gly-215, 241–242, and 263–264; these read GG and GT.

The protein belongs to the dihydroorotate dehydrogenase family. Type 1 subfamily. Heterotetramer of 2 PyrK and 2 PyrD type B subunits. FMN is required as a cofactor.

The protein localises to the cytoplasm. The enzyme catalyses (S)-dihydroorotate + NAD(+) = orotate + NADH + H(+). The protein operates within pyrimidine metabolism; UMP biosynthesis via de novo pathway; orotate from (S)-dihydroorotate (NAD(+) route): step 1/1. Functionally, catalyzes the conversion of dihydroorotate to orotate with NAD(+) as electron acceptor. The sequence is that of Dihydroorotate dehydrogenase B (NAD(+)), catalytic subunit (pyrD) from Thermococcus kodakarensis (strain ATCC BAA-918 / JCM 12380 / KOD1) (Pyrococcus kodakaraensis (strain KOD1)).